A 335-amino-acid chain; its full sequence is Teichoic acids export ATP-binding protein TagH (335 aa).

Positions 26–246 (IKGLFMPKSQ…YDEFVKWFNK (221 aa)) constitute an ABC transporter domain. Residue 60-67 (GINGSGKS) participates in ATP binding.

Belongs to the ABC transporter superfamily. Teichoic acids exporter (TC 3.A.1.104.1) family. The complex is composed of two ATP-binding proteins (TagH) and two transmembrane proteins (TagG).

Its subcellular location is the cell membrane. It carries out the reaction ATP + H2O + teichoic acidSide 1 = ADP + phosphate + teichoic acidSide 2.. Part of the ABC transporter complex TagGH involved in teichoic acids export. Responsible for energy coupling to the transport system. This chain is Teichoic acids export ATP-binding protein TagH, found in Listeria innocua serovar 6a (strain ATCC BAA-680 / CLIP 11262).